A 1124-amino-acid polypeptide reads, in one-letter code: MSRYVQRPENALKRANEFIDVGKKARALDTLQEVFRAKKWNYNWSESIIEPVMFKYLDLCVELKKSHIAKEGLFQYRNMFQLVNVGSLENVIRGYLKMAEERTEQAQQQSSQATVDIDDLDNLATPESILMSAVCGEDAQDRSDRTILLPWVKFLWESYCQCLELLKVNSHCETLYHDIARMAFQFCLKYNRKMEFRKLCEKLRKHLEDICKVSSQTANVTISKPETQQLNLETRLHQLDSAIQMELWLEAYKAIEDIHGLMQLSKKTPLPKTMALYYTKLAMVFWKAGNQLFHASALLKLFQLSRDMKKNVTAEEIQRMTTHVLIATLAIPLPSAHPEFDRFIETDKSPMEKAQRLAFLLGLQQSPSRALLLKELIRLNVLQLAAPQFRHLYQLLEVEFDPLNLCDQVQKIVDEIEADPNSVYGQYIQALKDVTLVRLVRQISQVYQTIEFPRLLELAKFADYHHLERILVDCVRHNDMQITIDHRNECVHFGTDLSESQREDHPDGPTLQSMPSEQIRSQLVNMSVVLHRAIATINPNRKKAERERLRAQMVHQYEENADKEHQRILQRQKKIEDRKEYIERMNQEREEEELRLQEEQVRMQKLAEQRRLEAENEERERKRHENELQMMKERNMKEKIEQIKQTATGQKLLKKLDEEEIRKLNTEEIAAREAEERLKERKAHENNLKTQEKKIDYFERAKRLEEIPLIEKYLQDRSVQDKEFWEKQEAARIEAAIAERKNAEACQERLKRMLPDRDVYWQQLKNERGNQFAEKLKQFNQALEEERKRRLADRVVKRREERRMKWLKEKEEERRRIEEELRKQKEEADRIERERRAEERRIQDEKNRQLAEKQLAIAEEVERRRREELEQMKEADGRRERRPAAGPAEPKPEESWRKGPAAAAPANPAADEPKKNVWQGSGRYGPGPRERGGETGPKDKWRTGPEDHEKDGGGAGGMRRGGDMRRGQDDRGPIRRGGGEERGEREDRGPIRRGGGPGDAPAGTGTPRRDDRPGGWFNRDRRDDRRDDRRDDRRDDRRGDDRGPRGGGERGNTWRRGPADNADDNRRGPRDEGRQDTWRNTRQDAAPKQKEDRPQREARPAQENVPPRSNAGPDEEGWTDVKHR.

A coiled-coil region spans residues 96-124 (LKMAEERTEQAQQQSSQATVDIDDLDNLA). In terms of domain architecture, PCI spans 317 to 498 (IQRMTTHVLI…ECVHFGTDLS (182 aa)). Composition is skewed to basic and acidic residues over residues 812 to 851 (EERR…RQLA) and 860 to 883 (EVER…ERRP). The tract at residues 812-1124 (EERRRIEEEL…EEGWTDVKHR (313 aa)) is disordered. Over residues 900–910 (PAAAAPANPAA) the composition is skewed to low complexity. Basic and acidic residues-rich tracts occupy residues 928–952 (PRER…EKDG), 960–990 (RGGD…DRGP), 1007–1048 (PRRD…RGGG), and 1063–1100 (DDNR…EARP).

The protein belongs to the eIF-3 subunit A family. Component of the eukaryotic translation initiation factor 3 (eIF-3) complex.

It localises to the cytoplasm. In terms of biological role, RNA-binding component of the eukaryotic translation initiation factor 3 (eIF-3) complex, which is involved in protein synthesis of a specialized repertoire of mRNAs and, together with other initiation factors, stimulates binding of mRNA and methionyl-tRNAi to the 40S ribosome. The eIF-3 complex specifically targets and initiates translation of a subset of mRNAs involved in cell proliferation. The polypeptide is Eukaryotic translation initiation factor 3 subunit A (Anopheles gambiae (African malaria mosquito)).